A 207-amino-acid polypeptide reads, in one-letter code: Putative tributyltin chloride resistance protein (207 aa).

The interval 37 to 122 (NLPIELALMP…YHAIAALNLG (86 aa)) is slt-type domain. Residue E49 is part of the active site.

It belongs to the transglycosylase Slt family.

The sequence is that of Putative tributyltin chloride resistance protein (tbtA) from Alteromonas sp. (strain M-1).